Consider the following 372-residue polypeptide: Dual-specificity RNA methyltransferase RlmN (372 aa).

Residue Glu-92 is the Proton acceptor of the active site. The Radical SAM core domain maps to 98–337; that stretch reads ETDRATLCVS…VILRKTRGDD (240 aa). Cys-105 and Cys-342 are disulfide-bonded. Residues Cys-112, Cys-116, and Cys-119 each contribute to the [4Fe-4S] cluster site. Residues 166-167, Ser-198, 220-222, and Asn-299 contribute to the S-adenosyl-L-methionine site; these read GE and SLH. Cys-342 acts as the S-methylcysteine intermediate in catalysis.

It belongs to the radical SAM superfamily. RlmN family. It depends on [4Fe-4S] cluster as a cofactor.

The protein resides in the cytoplasm. It carries out the reaction adenosine(2503) in 23S rRNA + 2 reduced [2Fe-2S]-[ferredoxin] + 2 S-adenosyl-L-methionine = 2-methyladenosine(2503) in 23S rRNA + 5'-deoxyadenosine + L-methionine + 2 oxidized [2Fe-2S]-[ferredoxin] + S-adenosyl-L-homocysteine. It catalyses the reaction adenosine(37) in tRNA + 2 reduced [2Fe-2S]-[ferredoxin] + 2 S-adenosyl-L-methionine = 2-methyladenosine(37) in tRNA + 5'-deoxyadenosine + L-methionine + 2 oxidized [2Fe-2S]-[ferredoxin] + S-adenosyl-L-homocysteine. Its function is as follows. Specifically methylates position 2 of adenine 2503 in 23S rRNA and position 2 of adenine 37 in tRNAs. m2A2503 modification seems to play a crucial role in the proofreading step occurring at the peptidyl transferase center and thus would serve to optimize ribosomal fidelity. This chain is Dual-specificity RNA methyltransferase RlmN, found in Histophilus somni (strain 129Pt) (Haemophilus somnus).